A 429-amino-acid polypeptide reads, in one-letter code: Chordin-like protein 2 (429 aa).

Residues 1–25 (MVPEVRVLSSLLGLALLWFPLDSHA) form the signal peptide. 2 VWFC domains span residues 31-96 (MFCL…PKCV) and 109-175 (KSCQ…QACK). N-linked (GlcNAc...) asparagine glycosylation occurs at asparagine 114. Serine 182 is subject to Phosphoserine; by FAM20C. Residues 182–224 (SDEEDSVQSLHGVRHPQDPCSSDAGRKRGPGTPAPTGLSAPLS) form a disordered region. The region spanning 250-315 (KACVHGGKTY…VAGKCCKICP (66 aa)) is the VWFC 3 domain.

Interacts with GDF5. May interact with BMP2, BMP4, BMP5, BMP6, BMP7 and INHBA. Post-translationally, phosphorylated by FAM20C in the extracellular medium. In terms of tissue distribution, highly expressed in uterus. Moderately expressed in heart, liver, prostate, testis and ovary. Weakly expressed in skeletal muscle, kidney, spleen, small intestine and colon. Expressed in the secretory epithelial cells of uterine endometrium, fallopian tubes, endocervical glands, bladder and prostate, as well as the transitional epithelium of the urinary bladder, and in bone osteoblasts (at protein level). In normal cartilage, expression was confined in a few chondrocytes in the superficial zone as well as in the middle zone. In diseased cartilage coming from osteoarthritic patients, expression was limited to the middle zone of chondrocytes. Isoform 1 and isoform 2 are expressed in fetal cerebellum and heart, while only isoform 2 is detected in fetal spleen. Isoform 2 present in plasma.

The protein resides in the secreted. It is found in the cytoplasm. Its function is as follows. May inhibit BMPs activity by blocking their interaction with their receptors. Has a negative regulator effect on the cartilage formation/regeneration from immature mesenchymal cells, by preventing or reducing the rate of matrix accumulation. Implicated in tumor angiogenesis. May play a role during myoblast and osteoblast differentiation, and maturation. In Homo sapiens (Human), this protein is Chordin-like protein 2 (CHRDL2).